Here is a 99-residue protein sequence, read N- to C-terminus: Nucleoid-associated protein EbfC (99 aa).

This sequence belongs to the YbaB/EbfC family. Homodimer. Can form tetramers and octamers in solution.

The protein resides in the cytoplasm. Its subcellular location is the nucleoid. In terms of biological role, binds to DNA and alters its conformation. May be involved in global regulation of gene expression. Binds specifically and non-specifically to DNA, preferentially to the 4 bp broken palindrome 5'-GTnAC-3'. Affects expression of a wide variety of genes, encoding both structural and metabolic proteins. This chain is Nucleoid-associated protein EbfC, found in Borreliella burgdorferi (strain ATCC 35210 / DSM 4680 / CIP 102532 / B31) (Borrelia burgdorferi).